A 925-amino-acid chain; its full sequence is Serine/threonine-protein kinase SIK2 (925 aa).

The Protein kinase domain maps to 20 to 271; sequence YDIEGTLGKG…IAQIKEHKWM (252 aa). At T25 the chain carries Phosphothreonine. ATP is bound by residues 26-34 and K49; that span reads LGKGNFAVV. K53 is subject to N6-acetyllysine; by EP300. D142 (proton acceptor) is an active-site residue. Residue T175 is modified to Phosphothreonine. One can recognise a UBA domain in the interval 295–335; sequence EFNEQVLRLMHSLGIDQQKTIESLQNKSYNHFAAIYFLLVE. At S534 the chain carries Phosphoserine. A disordered region spans residues 564–586; sequence ALSSQKREVHNRSPVSFREGRRA. The residue at position 587 (S587) is a Phosphoserine. Disordered stretches follow at residues 630-674, 742-776, and 800-895; these read PNLA…PRQS, SSYP…PLSP, and QPLP…SSYD. 2 stretches are compositionally biased toward low complexity: residues 648 to 659 and 742 to 756; these read QEEVSQQQESVS and SSYP…LPRQ. The segment covering 765 to 774 has biased composition (polar residues); sequence APPFSLTQPL. Low complexity predominate over residues 808–820; sequence PRAAPLPTQLQQQ. Over residues 821 to 833 the composition is skewed to pro residues; the sequence is QPPPPPPPPPPRQ.

It belongs to the protein kinase superfamily. CAMK Ser/Thr protein kinase family. SNF1 subfamily. Interacts with and phosphorylates TORC2/CRTC2. Requires Mg(2+) as cofactor. Post-translationally, phosphorylated at Thr-175 by STK11/LKB1 in complex with STE20-related adapter-alpha (STRADA) pseudo kinase and CAB39. Phosphorylated at Thr-484 in response to insulin in adipocytes. In terms of processing, acetylation at Lys-53 inhibits kinase activity. Deacetylated by HDAC6.

It is found in the cytoplasm. The protein resides in the endoplasmic reticulum membrane. It catalyses the reaction L-seryl-[protein] + ATP = O-phospho-L-seryl-[protein] + ADP + H(+). The enzyme catalyses L-threonyl-[protein] + ATP = O-phospho-L-threonyl-[protein] + ADP + H(+). Activated by phosphorylation on Thr-175. Serine/threonine-protein kinase that plays a role in many biological processes such as fatty acid oxidation, autophagy, immune response or glucose metabolism. Phosphorylates 'Ser-794' of IRS1 in insulin-stimulated adipocytes, potentially modulating the efficiency of insulin signal transduction. Inhibits CREB activity by phosphorylating and repressing TORCs, the CREB-specific coactivators. Phosphorylates EP300 and thus inhibits its histone acetyltransferase activity. In turn, regulates the DNA-binding ability of several transcription factors such as PPARA or MLXIPL. Also plays a role in thymic T-cell development. This chain is Serine/threonine-protein kinase SIK2 (SIK2), found in Pongo abelii (Sumatran orangutan).